The following is an 81-amino-acid chain: X antigen family member 1 (81 aa).

Lysine 12 participates in a covalent cross-link: Glycyl lysine isopeptide (Lys-Gly) (interchain with G-Cter in SUMO2). Serine 20 bears the Phosphoserine mark. Residues lysine 61 and lysine 65 each participate in a glycyl lysine isopeptide (Lys-Gly) (interchain with G-Cter in SUMO2) cross-link.

Belongs to the GAGE family. In normal tissues, highly expressed in testis. Expressed also in many different types of cancers: highly expressed in breast cancer, prostate cancer and many types of lung cancers, including squamous cell carcinoma, small cell carcinoma, non-small cell carcinoma, and adenocarcinoma, as well as in Ewing's cell lines, in some Ewing's sarcoma patient samples, and in one of one alveolar rhabdomyosarcoma patient sample.

The sequence is that of X antigen family member 1 from Homo sapiens (Human).